The sequence spans 229 residues: UPF0758 protein Cbei_0490 (229 aa).

In terms of domain architecture, MPN spans 107-229; it reads KITSPKDLAS…FVSLKERGLI (123 aa). His-178, His-180, and Asp-191 together coordinate Zn(2+). A JAMM motif motif is present at residues 178–191; the sequence is HNHPSGDPTPSRED.

The protein belongs to the UPF0758 family.

This Clostridium beijerinckii (strain ATCC 51743 / NCIMB 8052) (Clostridium acetobutylicum) protein is UPF0758 protein Cbei_0490.